We begin with the raw amino-acid sequence, 351 residues long: Histidine protein kinase SaeS (351 aa).

The next 2 helical transmembrane spans lie at 9–29 (IIIGVVSSILLTSTILAIAYI) and 40–60 (TLTLTTIITSCLTLLICSIFI). The HAMP domain occupies 61–114 (NPLIQKIKQFNIKTKQFANGNYASNDKTFNSPKEIYELNQSFNKMASEITQQMN). Residues 129 to 348 (NLAHDLKTPL…TMTVTLHKLD (220 aa)) form the Histidine kinase domain. Residue histidine 132 is modified to Phosphohistidine; by autocatalysis.

In terms of processing, autophosphorylated.

It is found in the cell membrane. The catalysed reaction is ATP + protein L-histidine = ADP + protein N-phospho-L-histidine.. Member of the two-component regulatory system SaeR/SaeS involved in the regulation of staphylococcal virulence factors in a strain-dependent fashion. Probably functions as a membrane-associated protein kinase that upon sensing the appropriate signal, autophosphorylates and in turn activates the cytosolic response regulator SaeR. The sequence is that of Histidine protein kinase SaeS (saeS) from Staphylococcus aureus (strain USA300).